Reading from the N-terminus, the 231-residue chain is MQGKFDKIANITLVMKTLDNNLPFNLQIENQLFSSGYELVAGGDEAGRGPVAGPVVAAIVVIKPGIYIPEVDDSKKLSSKKREKLFEEIINLVTDWSVAVVGPDLIDRLNIYQATKFAFKAALDSLSIKPEALILDALKLTGFSGKQVSMVKADEISFAVACASILAKVIRDKIMEQYDKDFPGYGFKKNKGYLTREHREALELLGPSPIHRKSFEPIKSFYGQLKLFEKV.

One can recognise an RNase H type-2 domain in the interval 38–227 (ELVAGGDEAG…IKSFYGQLKL (190 aa)). The a divalent metal cation site is built by Asp44, Glu45, and Asp136.

Belongs to the RNase HII family. Requires Mn(2+) as cofactor. Mg(2+) serves as cofactor.

It is found in the cytoplasm. It catalyses the reaction Endonucleolytic cleavage to 5'-phosphomonoester.. Functionally, endonuclease that specifically degrades the RNA of RNA-DNA hybrids. The protein is Ribonuclease HII of Carboxydothermus hydrogenoformans (strain ATCC BAA-161 / DSM 6008 / Z-2901).